Here is a 92-residue protein sequence, read N- to C-terminus: Small ribosomal subunit protein uS19 (92 aa).

The segment at 1–27 (MARSIKKGPFADDHLKKKVEAQSGSEK) is disordered. The segment covering 9 to 27 (PFADDHLKKKVEAQSGSEK) has biased composition (basic and acidic residues).

Belongs to the universal ribosomal protein uS19 family.

Functionally, protein S19 forms a complex with S13 that binds strongly to the 16S ribosomal RNA. The protein is Small ribosomal subunit protein uS19 of Staphylococcus saprophyticus subsp. saprophyticus (strain ATCC 15305 / DSM 20229 / NCIMB 8711 / NCTC 7292 / S-41).